Here is a 321-residue protein sequence, read N- to C-terminus: Secreted RxLR effector protein 71 (321 aa).

The N-terminal stretch at 1–23 is a signal peptide; the sequence is MRPTGWRWPVLSLLLVLLPFQAA. Positions 84-87 match the RxLR motif; the sequence is RSLR. N114 carries N-linked (GlcNAc...) asparagine glycosylation. Positions 210–237 are disordered; the sequence is VSLGRDGNGPVRGISSSPTRLTRPRMGG.

Belongs to the RxLR effector family.

Its subcellular location is the secreted. It localises to the host cell. Its function is as follows. Secreted effector that partially suppresses the host cell death induced by cell death-inducing proteins. This chain is Secreted RxLR effector protein 71, found in Plasmopara viticola (Downy mildew of grapevine).